The chain runs to 558 residues: Ankyrin repeat protein OPG189 (558 aa).

ANK repeat units lie at residues 65–95 (YGEN…NINK), 169–205 (YGCT…DVDK), 209–239 (YGNT…NIDS), 243–272 (NRYT…NVNA), 276–304 (FGTT…ELEI), 339–368 (YNET…DFET), and 372–401 (SGCT…SLKI).

The protein belongs to the orthopoxvirus OPG189 protein family.

Its function is as follows. Contributes to viral release without involving rearrangement of host actin. This chain is Ankyrin repeat protein OPG189 (OPG189), found in Homo sapiens (Human).